Here is a 117-residue protein sequence, read N- to C-terminus: MSKKNSQTSPQRQKMHVKKGDVVQVIAGSDKGKVGEILRALPQESTVVVKGVNIRTKHTKPQQEGESGQIVTYEAPIHSSKVMLYSEKKKIASRVGYTLTEDGRKVRILKKTGEIID.

The segment covering 1-12 (MSKKNSQTSPQR) has biased composition (polar residues). Positions 1–20 (MSKKNSQTSPQRQKMHVKKG) are disordered.

This sequence belongs to the universal ribosomal protein uL24 family. As to quaternary structure, part of the 50S ribosomal subunit.

Its function is as follows. One of two assembly initiator proteins, it binds directly to the 5'-end of the 23S rRNA, where it nucleates assembly of the 50S subunit. One of the proteins that surrounds the polypeptide exit tunnel on the outside of the subunit. This Microcystis aeruginosa (strain NIES-843 / IAM M-2473) protein is Large ribosomal subunit protein uL24.